The primary structure comprises 189 residues: Mercury resistance operon ORF3 (189 aa).

Positions M1–A27 form a signal peptide, tat-type signal. The region spanning T38–A189 is the Thioredoxin domain.

In terms of processing, predicted to be exported by the Tat system. The position of the signal peptide cleavage has not been experimentally proven.

The protein resides in the secreted. Functionally, probable mercury binding protein. This chain is Mercury resistance operon ORF3, found in Streptomyces lividans.